A 632-amino-acid chain; its full sequence is 1-deoxy-D-xylulose-5-phosphate synthase (632 aa).

Residues H72 and 113–115 (GHA) each bind thiamine diphosphate. D144 is a binding site for Mg(2+). Thiamine diphosphate is bound by residues 145 to 146 (GA), N174, Y285, and E368. Position 174 (N174) interacts with Mg(2+).

This sequence belongs to the transketolase family. DXPS subfamily. As to quaternary structure, homodimer. Mg(2+) is required as a cofactor. It depends on thiamine diphosphate as a cofactor.

The catalysed reaction is D-glyceraldehyde 3-phosphate + pyruvate + H(+) = 1-deoxy-D-xylulose 5-phosphate + CO2. It participates in metabolic intermediate biosynthesis; 1-deoxy-D-xylulose 5-phosphate biosynthesis; 1-deoxy-D-xylulose 5-phosphate from D-glyceraldehyde 3-phosphate and pyruvate: step 1/1. Functionally, catalyzes the acyloin condensation reaction between C atoms 2 and 3 of pyruvate and glyceraldehyde 3-phosphate to yield 1-deoxy-D-xylulose-5-phosphate (DXP). The chain is 1-deoxy-D-xylulose-5-phosphate synthase from Cyanothece sp. (strain PCC 7425 / ATCC 29141).